Reading from the N-terminus, the 467-residue chain is Chromosomal replication initiator protein DnaA (467 aa).

Residues 1-90 (MSLSLWQQCL…KPVTQTPQAA (90 aa)) are domain I, interacts with DnaA modulators. A domain II region spans residues 91-130 (VTSNVAAPAQVAQTQPQRAAPSMRSGWDNVPAPAEPTYRS). A domain III, AAA+ region region spans residues 131–347 (NVNVKHTFDN…GALNRVIANA (217 aa)). ATP is bound by residues Gly-175, Gly-177, Lys-178, and Thr-179. Residues 348-467 (NFTGRAITID…FSNLIRTLSS (120 aa)) form a domain IV, binds dsDNA region.

The protein belongs to the DnaA family. Oligomerizes as a right-handed, spiral filament on DNA at oriC.

Its subcellular location is the cytoplasm. Functionally, plays an essential role in the initiation and regulation of chromosomal replication. ATP-DnaA binds to the origin of replication (oriC) to initiate formation of the DNA replication initiation complex once per cell cycle. Binds the DnaA box (a 9 base pair repeat at the origin) and separates the double-stranded (ds)DNA. Forms a right-handed helical filament on oriC DNA; dsDNA binds to the exterior of the filament while single-stranded (ss)DNA is stabiized in the filament's interior. The ATP-DnaA-oriC complex binds and stabilizes one strand of the AT-rich DNA unwinding element (DUE), permitting loading of DNA polymerase. After initiation quickly degrades to an ADP-DnaA complex that is not apt for DNA replication. Binds acidic phospholipids. The chain is Chromosomal replication initiator protein DnaA from Escherichia coli (strain ATCC 8739 / DSM 1576 / NBRC 3972 / NCIMB 8545 / WDCM 00012 / Crooks).